The sequence spans 261 residues: Cytochrome c oxidase subunit 3 (261 aa).

Topologically, residues 1–15 (MTNQLHPFHMTNPSP) are mitochondrial matrix. The chain crosses the membrane as a helical span at residues 16 to 34 (WPLTGATAALLMTSGLIMW). Over 35-40 (FHYNSS) the chain is Mitochondrial intermembrane. Residues 41 to 66 (QLIMLGLLIMLLTLTQWWRDIVREST) traverse the membrane as a helical segment. The Mitochondrial matrix portion of the chain corresponds to 67-72 (FQGHHT). Residues 73–105 (PSVQNNLRYGMILFITSEILFFTGFFWAFYHSS) traverse the membrane as a helical segment. Over 106-128 (LSPTAELGNIWPPTGITPLNPFE) the chain is Mitochondrial intermembrane. The helical transmembrane segment at 129–152 (VPLLNTAVLLASGVTITWAHHSLM) threads the bilayer. Residues 153 to 155 (EGN) lie on the Mitochondrial matrix side of the membrane. Residues 156-183 (RPQTLQALTLTIILGTYFTILQAMEYFE) form a helical membrane-spanning segment. At 184–190 (ASFTIAD) the chain is on the mitochondrial intermembrane side. Residues 191-223 (SIYGSTFFVATGFHGLHVIIGSTFLIVCLMRQL) form a helical membrane-spanning segment. Topologically, residues 224–232 (KYHFTSHHH) are mitochondrial matrix. A helical membrane pass occupies residues 233–256 (FGFEAAAWYWHFVDVIWLFLYLSI). Residues 257-261 (YWWGS) are Mitochondrial intermembrane-facing.

This sequence belongs to the cytochrome c oxidase subunit 3 family. As to quaternary structure, component of the cytochrome c oxidase (complex IV, CIV), a multisubunit enzyme composed of 14 subunits. The complex is composed of a catalytic core of 3 subunits MT-CO1, MT-CO2 and MT-CO3, encoded in the mitochondrial DNA, and 11 supernumerary subunits COX4I, COX5A, COX5B, COX6A, COX6B, COX6C, COX7A, COX7B, COX7C, COX8 and NDUFA4, which are encoded in the nuclear genome. The complex exists as a monomer or a dimer and forms supercomplexes (SCs) in the inner mitochondrial membrane with NADH-ubiquinone oxidoreductase (complex I, CI) and ubiquinol-cytochrome c oxidoreductase (cytochrome b-c1 complex, complex III, CIII), resulting in different assemblies (supercomplex SCI(1)III(2)IV(1) and megacomplex MCI(2)III(2)IV(2)).

It localises to the mitochondrion inner membrane. It catalyses the reaction 4 Fe(II)-[cytochrome c] + O2 + 8 H(+)(in) = 4 Fe(III)-[cytochrome c] + 2 H2O + 4 H(+)(out). Its function is as follows. Component of the cytochrome c oxidase, the last enzyme in the mitochondrial electron transport chain which drives oxidative phosphorylation. The respiratory chain contains 3 multisubunit complexes succinate dehydrogenase (complex II, CII), ubiquinol-cytochrome c oxidoreductase (cytochrome b-c1 complex, complex III, CIII) and cytochrome c oxidase (complex IV, CIV), that cooperate to transfer electrons derived from NADH and succinate to molecular oxygen, creating an electrochemical gradient over the inner membrane that drives transmembrane transport and the ATP synthase. Cytochrome c oxidase is the component of the respiratory chain that catalyzes the reduction of oxygen to water. Electrons originating from reduced cytochrome c in the intermembrane space (IMS) are transferred via the dinuclear copper A center (CU(A)) of subunit 2 and heme A of subunit 1 to the active site in subunit 1, a binuclear center (BNC) formed by heme A3 and copper B (CU(B)). The BNC reduces molecular oxygen to 2 water molecules using 4 electrons from cytochrome c in the IMS and 4 protons from the mitochondrial matrix. This is Cytochrome c oxidase subunit 3 (MT-CO3) from Pelomedusa subrufa (African side-necked turtle).